The sequence spans 257 residues: Phosphonates import ATP-binding protein PhnC (257 aa).

The ABC transporter domain occupies 2-246; it reads IEFRNVSKVY…KFAEIYGDVA (245 aa). 35–42 is an ATP binding site; sequence GLSGAGKS.

This sequence belongs to the ABC transporter superfamily. Phosphonates importer (TC 3.A.1.9.1) family. The complex is composed of two ATP-binding proteins (PhnC), two transmembrane proteins (PhnE) and a solute-binding protein (PhnD).

Its subcellular location is the cell membrane. The enzyme catalyses phosphonate(out) + ATP + H2O = phosphonate(in) + ADP + phosphate + H(+). Part of the ABC transporter complex PhnCDE involved in phosphonates import. Responsible for energy coupling to the transport system. This chain is Phosphonates import ATP-binding protein PhnC, found in Bacillus cereus (strain ATCC 10987 / NRS 248).